Here is a 340-residue protein sequence, read N- to C-terminus: UDP-3-O-acylglucosamine N-acyltransferase (340 aa).

Histidine 238 functions as the Proton acceptor in the catalytic mechanism.

Belongs to the transferase hexapeptide repeat family. LpxD subfamily. Homotrimer.

The catalysed reaction is a UDP-3-O-[(3R)-3-hydroxyacyl]-alpha-D-glucosamine + a (3R)-hydroxyacyl-[ACP] = a UDP-2-N,3-O-bis[(3R)-3-hydroxyacyl]-alpha-D-glucosamine + holo-[ACP] + H(+). It functions in the pathway bacterial outer membrane biogenesis; LPS lipid A biosynthesis. In terms of biological role, catalyzes the N-acylation of UDP-3-O-acylglucosamine using 3-hydroxyacyl-ACP as the acyl donor. Is involved in the biosynthesis of lipid A, a phosphorylated glycolipid that anchors the lipopolysaccharide to the outer membrane of the cell. In Shewanella frigidimarina (strain NCIMB 400), this protein is UDP-3-O-acylglucosamine N-acyltransferase.